The chain runs to 265 residues: Methyl-coenzyme M reductase II subunit gamma (265 aa).

Residue R123 participates in coenzyme M binding.

Belongs to the methyl-coenzyme M reductase gamma subunit family. In terms of assembly, MCR is a hexamer of two alpha, two beta, and two gamma chains, forming a dimer of heterotrimers. Requires coenzyme F430 as cofactor.

The enzyme catalyses coenzyme B + methyl-coenzyme M = methane + coenzyme M-coenzyme B heterodisulfide. Its pathway is one-carbon metabolism; methyl-coenzyme M reduction; methane from methyl-coenzyme M: step 1/1. Component of the methyl-coenzyme M reductase (MCR) I that catalyzes the reductive cleavage of methyl-coenzyme M (CoM-S-CH3 or 2-(methylthio)ethanesulfonate) using coenzyme B (CoB or 7-mercaptoheptanoylthreonine phosphate) as reductant which results in the production of methane and the mixed heterodisulfide of CoB and CoM (CoM-S-S-CoB). This is the final step in methanogenesis. In Methanothermobacter thermautotrophicus (strain ATCC 29096 / DSM 1053 / JCM 10044 / NBRC 100330 / Delta H) (Methanobacterium thermoautotrophicum), this protein is Methyl-coenzyme M reductase II subunit gamma (mrtG).